A 343-amino-acid polypeptide reads, in one-letter code: Homeobox protein Hox-D13 (343 aa).

Disordered stretches follow at residues 1–28 (MSRA…SSSS) and 78–115 (GTSE…PAAA). Low complexity predominate over residues 85–115 (SSSSSSSSAVVAARPEAPPAKECPAPTPAAA). Positions 276-335 (GRKKRVPYTKLQLKELENEYAINKFINKDKRRRISAATNLSERQVTIWFQNRRVKDKKIV) form a DNA-binding region, homeobox.

Belongs to the Abd-B homeobox family.

It localises to the nucleus. Sequence-specific transcription factor that binds gene promoters and activates their transcription. Part of a developmental regulatory system that provides cells with specific positional identities on the anterior-posterior axis. This chain is Homeobox protein Hox-D13 (HOXD13), found in Homo sapiens (Human).